We begin with the raw amino-acid sequence, 271 residues long: PA-phosphatase related-family protein DDB_G0284367 (271 aa).

6 consecutive transmembrane segments (helical) span residues 23–43, 68–88, 102–122, 150–170, 181–201, and 211–231; these read FLCLGIFVIESVLFNFVIPPF, IVPVWLLMLIALGLPMVVFIG, AALGLFQAFTITMLFTDILKV, FPSGHSSVSFCGMTFLSFYLC, GNILKALVCLCPFMISALVAV, and FSDILAGSVIGLSIGVFVYFM.

Belongs to the PA-phosphatase related phosphoesterase family.

It is found in the membrane. The polypeptide is PA-phosphatase related-family protein DDB_G0284367 (Dictyostelium discoideum (Social amoeba)).